A 133-amino-acid chain; its full sequence is Peptide methionine sulfoxide reductase MsrB (133 aa).

Residues 8–130 (LDVWRELLSD…NSASLRLKPR (123 aa)) form the MsrB domain. Positions 47, 50, 96, and 99 each coordinate Zn(2+). Cys-119 acts as the Nucleophile in catalysis.

It belongs to the MsrB Met sulfoxide reductase family. Zn(2+) serves as cofactor.

It carries out the reaction L-methionyl-[protein] + [thioredoxin]-disulfide + H2O = L-methionyl-(R)-S-oxide-[protein] + [thioredoxin]-dithiol. The sequence is that of Peptide methionine sulfoxide reductase MsrB from Azotobacter vinelandii (strain DJ / ATCC BAA-1303).